The primary structure comprises 167 residues: Crossover junction endodeoxyribonuclease RuvC (167 aa).

Residues Asp-7, Glu-67, and Asp-140 contribute to the active site. Mg(2+) is bound by residues Asp-7, Glu-67, and Asp-140.

This sequence belongs to the RuvC family. Homodimer which binds Holliday junction (HJ) DNA. The HJ becomes 2-fold symmetrical on binding to RuvC with unstacked arms; it has a different conformation from HJ DNA in complex with RuvA. In the full resolvosome a probable DNA-RuvA(4)-RuvB(12)-RuvC(2) complex forms which resolves the HJ. Mg(2+) is required as a cofactor.

The protein localises to the cytoplasm. It carries out the reaction Endonucleolytic cleavage at a junction such as a reciprocal single-stranded crossover between two homologous DNA duplexes (Holliday junction).. In terms of biological role, the RuvA-RuvB-RuvC complex processes Holliday junction (HJ) DNA during genetic recombination and DNA repair. Endonuclease that resolves HJ intermediates. Cleaves cruciform DNA by making single-stranded nicks across the HJ at symmetrical positions within the homologous arms, yielding a 5'-phosphate and a 3'-hydroxyl group; requires a central core of homology in the junction. The consensus cleavage sequence is 5'-(A/T)TT(C/G)-3'. Cleavage occurs on the 3'-side of the TT dinucleotide at the point of strand exchange. HJ branch migration catalyzed by RuvA-RuvB allows RuvC to scan DNA until it finds its consensus sequence, where it cleaves and resolves the cruciform DNA. The chain is Crossover junction endodeoxyribonuclease RuvC from Dehalococcoides mccartyi (strain ATCC BAA-2100 / JCM 16839 / KCTC 5957 / BAV1).